A 988-amino-acid chain; its full sequence is Bifunctional glutamine synthetase adenylyltransferase/adenylyl-removing enzyme (988 aa).

The adenylyl removase stretch occupies residues 1-472 (MTKRETVERR…RYSALFEQET (472 aa)). The interval 476–988 (GEAGNLVFTG…AFVAVVKNGG (513 aa)) is adenylyl transferase.

The protein belongs to the GlnE family. Requires Mg(2+) as cofactor.

It catalyses the reaction [glutamine synthetase]-O(4)-(5'-adenylyl)-L-tyrosine + phosphate = [glutamine synthetase]-L-tyrosine + ADP. The catalysed reaction is [glutamine synthetase]-L-tyrosine + ATP = [glutamine synthetase]-O(4)-(5'-adenylyl)-L-tyrosine + diphosphate. Its function is as follows. Involved in the regulation of glutamine synthetase GlnA, a key enzyme in the process to assimilate ammonia. When cellular nitrogen levels are high, the C-terminal adenylyl transferase (AT) inactivates GlnA by covalent transfer of an adenylyl group from ATP to specific tyrosine residue of GlnA, thus reducing its activity. Conversely, when nitrogen levels are low, the N-terminal adenylyl removase (AR) activates GlnA by removing the adenylyl group by phosphorolysis, increasing its activity. The regulatory region of GlnE binds the signal transduction protein PII (GlnB) which indicates the nitrogen status of the cell. This Agrobacterium fabrum (strain C58 / ATCC 33970) (Agrobacterium tumefaciens (strain C58)) protein is Bifunctional glutamine synthetase adenylyltransferase/adenylyl-removing enzyme.